Here is a 223-residue protein sequence, read N- to C-terminus: Prolactin-3D4 (223 aa).

The N-terminal stretch at 1 to 28 (MQLTLTLSGSSMQLLLLVSNLLLWENMA) is a signal peptide. Disulfide bonds link C80–C198 and C215–C223. Residues N108 and N157 are each glycosylated (N-linked (GlcNAc...) asparagine).

Belongs to the somatotropin/prolactin family. In terms of processing, N-glycosylated.

Its subcellular location is the secreted. The chain is Prolactin-3D4 (Prl3d4) from Rattus norvegicus (Rat).